Here is a 389-residue protein sequence, read N- to C-terminus: Chalcone synthase E (389 aa).

The active site involves Cys-164.

It belongs to the thiolase-like superfamily. Chalcone/stilbene synthases family.

It carries out the reaction (E)-4-coumaroyl-CoA + 3 malonyl-CoA + 3 H(+) = 2',4,4',6'-tetrahydroxychalcone + 3 CO2 + 4 CoA. It functions in the pathway secondary metabolite biosynthesis; flavonoid biosynthesis. Functionally, the primary product of this enzyme is 4,2',4',6'-tetrahydroxychalcone (also termed naringenin-chalcone or chalcone) which can under specific conditions spontaneously isomerize into naringenin. This is Chalcone synthase E (CHSE) from Ipomoea purpurea (Common morning glory).